We begin with the raw amino-acid sequence, 641 residues long: Chaperone protein DnaK (641 aa).

A Phosphothreonine; by autocatalysis modification is found at Thr199. Positions 603–613 (YTQQGGTAGSE) are enriched in polar residues. A disordered region spans residues 603-641 (YTQQGGTAGSETHSHEKAGGSGGDDVVDAEFEEVRDDKR). Acidic residues predominate over residues 627-641 (DVVDAEFEEVRDDKR).

The protein belongs to the heat shock protein 70 family.

Its function is as follows. Acts as a chaperone. This is Chaperone protein DnaK from Methylococcus capsulatus (strain ATCC 33009 / NCIMB 11132 / Bath).